We begin with the raw amino-acid sequence, 175 residues long: MASLNDSHFDLFDLPAQFALDASALDHAYRTVQAQVHPDRFAAAGDAQKRIAMQWATRTNEAYQTLRDPLKRATYLLHLRGIDVGAENNTAMEPAFLMQQMEWRESIEDAAAAKNVDALDALLTELRDEERMRFDKLGALLDSGANQAAGEAVRQLMFIERVASEIGTQIERLEN.

Positions 7-79 (SHFDLFDLPA…LKRATYLLHL (73 aa)) constitute a J domain.

The protein belongs to the HscB family. Interacts with HscA and stimulates its ATPase activity.

Functionally, co-chaperone involved in the maturation of iron-sulfur cluster-containing proteins. Seems to help targeting proteins to be folded toward HscA. This chain is Co-chaperone protein HscB homolog, found in Paraburkholderia xenovorans (strain LB400).